A 198-amino-acid chain; its full sequence is C4b-binding protein beta chain (198 aa).

The N-terminal stretch at 1–17 (MFFWLMCYLVDVWLISA) is a signal peptide. The region spanning 22–77 (HCPDPLLVTDEFSSLEPVNVNDTFMFKCNEHCIFKGSNWSQCRENHTRVTHSPVSK) is the Sushi 1; atypical; lacks a Cys domain. N-linked (GlcNAc...) asparagine glycosylation is found at N42, N59, and N66. The region spanning 79–135 (RDCGPPETPTHGYFEGRDFKSGSTITYYCEARYRLVGTQHQQCIDGEWTSAPPICEL) is the Sushi 2 domain. 2 cysteine pairs are disulfide-bonded: C81–C121 and C107–C133.

Disulfide-linked complex of alpha and beta chains.

The protein localises to the secreted. Its function is as follows. Controls the classical pathway of complement activation. It binds as a cofactor to C3b/C4b inactivator (C3bINA), which then hydrolyzes the complement fragment C4b. It also accelerates the degradation of the C4bC2a complex (C3 convertase) by dissociating the complement fragment C2a. It also interacts with serum amyloid P component. This is C4b-binding protein beta chain (C4BPB) from Bos taurus (Bovine).